Reading from the N-terminus, the 380-residue chain is Protein Wnt-5a (380 aa).

Positions 1-35 are cleaved as a signal peptide; the sequence is MKKSIGILSPGVALGMAGSAMSSKFFLVALAIFFS. A propeptide spanning residues 36–61 is cleaved from the precursor; sequence FAQVVIEANSWWSLGMNNPVQMSEVY. Cysteine 104 and cysteine 115 are joined by a disulfide. Residues asparagine 114 and asparagine 120 are each glycosylated (N-linked (GlcNAc...) asparagine). Disulfide bonds link cysteine 154-cysteine 162, cysteine 164-cysteine 182, cysteine 238-cysteine 252, cysteine 240-cysteine 247, cysteine 309-cysteine 340, cysteine 325-cysteine 335, cysteine 339-cysteine 379, cysteine 355-cysteine 370, cysteine 357-cysteine 367, and cysteine 362-cysteine 363. Serine 244 is lipidated: O-palmitoleoyl serine; by PORCN. Residues asparagine 312 and asparagine 326 are each glycosylated (N-linked (GlcNAc...) asparagine).

This sequence belongs to the Wnt family. Forms a soluble 1:1 complex with AFM; this prevents oligomerization and is required for prolonged biological activity. The complex with AFM may represent the physiological form in body fluids. Homooligomer; disulfide-linked, leading to inactivation (in vitro). Interacts with PORCN. Interacts with WLS. Interacts with glypican GCP3. Interacts with PKD1 (via extracellular domain). Interacts with TMEM67. Post-translationally, glycosylation is necessary for secretion but not for activity. Palmitoleoylation is required for efficient binding to frizzled receptors. Depalmitoleoylation leads to Wnt signaling pathway inhibition. In terms of processing, proteolytic processing by TIKI1 and TIKI2 promotes oxidation and formation of large disulfide-bond oligomers, leading to inactivation of WNT5A. Expression is increased in differentiated thyroid carcinomas compared to normal thyroid tissue and anaplastic thyroid tumors where expression is low or undetectable. Expression is found in thyrocytes but not in stromal cells (at protein level). Detected in neonate heart and lung.

The protein resides in the secreted. It is found in the extracellular space. The protein localises to the extracellular matrix. Functionally, ligand for members of the frizzled family of seven transmembrane receptors. Can activate or inhibit canonical Wnt signaling, depending on receptor context. In the presence of FZD4, activates beta-catenin signaling. In the presence of ROR2, inhibits the canonical Wnt pathway by promoting beta-catenin degradation through a GSK3-independent pathway which involves down-regulation of beta-catenin-induced reporter gene expression. Suppression of the canonical pathway allows chondrogenesis to occur and inhibits tumor formation. Stimulates cell migration. Decreases proliferation, migration, invasiveness and clonogenicity of carcinoma cells and may act as a tumor suppressor. Mediates motility of melanoma cells. Required during embryogenesis for extension of the primary anterior-posterior axis and for outgrowth of limbs and the genital tubercle. Inhibits type II collagen expression in chondrocytes. This chain is Protein Wnt-5a (WNT5A), found in Homo sapiens (Human).